We begin with the raw amino-acid sequence, 364 residues long: UDP-N-acetylglucosamine--N-acetylmuramyl-(pentapeptide) pyrophosphoryl-undecaprenol N-acetylglucosamine transferase (364 aa).

Residues 15-17 (TGG), N123, R164, S191, and Q286 contribute to the UDP-N-acetyl-alpha-D-glucosamine site.

It belongs to the glycosyltransferase 28 family. MurG subfamily.

The protein localises to the cell inner membrane. The catalysed reaction is di-trans,octa-cis-undecaprenyl diphospho-N-acetyl-alpha-D-muramoyl-L-alanyl-D-glutamyl-meso-2,6-diaminopimeloyl-D-alanyl-D-alanine + UDP-N-acetyl-alpha-D-glucosamine = di-trans,octa-cis-undecaprenyl diphospho-[N-acetyl-alpha-D-glucosaminyl-(1-&gt;4)]-N-acetyl-alpha-D-muramoyl-L-alanyl-D-glutamyl-meso-2,6-diaminopimeloyl-D-alanyl-D-alanine + UDP + H(+). The protein operates within cell wall biogenesis; peptidoglycan biosynthesis. Its function is as follows. Cell wall formation. Catalyzes the transfer of a GlcNAc subunit on undecaprenyl-pyrophosphoryl-MurNAc-pentapeptide (lipid intermediate I) to form undecaprenyl-pyrophosphoryl-MurNAc-(pentapeptide)GlcNAc (lipid intermediate II). The polypeptide is UDP-N-acetylglucosamine--N-acetylmuramyl-(pentapeptide) pyrophosphoryl-undecaprenol N-acetylglucosamine transferase (Prochlorococcus marinus (strain MIT 9515)).